Consider the following 263-residue polypeptide: N-acyl homoserine lactonase AttM (263 aa).

The Zn(2+) site is built by histidine 103, histidine 105, aspartate 107, histidine 108, histidine 180, aspartate 202, and histidine 247.

The protein belongs to the metallo-beta-lactamase superfamily. Zn(2+) is required as a cofactor.

The catalysed reaction is an N-acyl-L-homoserine lactone + H2O = an N-acyl-L-homoserine + H(+). This Azorhizobium caulinodans (strain ATCC 43989 / DSM 5975 / JCM 20966 / LMG 6465 / NBRC 14845 / NCIMB 13405 / ORS 571) protein is N-acyl homoserine lactonase AttM.